Here is an 812-residue protein sequence, read N- to C-terminus: Fibroblast growth factor receptor 1 (812 aa).

The first 20 residues, 1-20 (MFSGMSLLLWGVLLGAALSV), serve as a signal peptide directing secretion. At 21-371 (ARPPSTLPDE…PALLASPLQL (351 aa)) the chain is on the extracellular side. Residues 25–118 (STLPDEVAPK…YTVLCSVNVS (94 aa)) form the Ig-like C2-type 1 domain. An intrachain disulfide couples C54 to C100. N76, N116, N133, N223, N236, N260, N292, N313, and N326 each carry an N-linked (GlcNAc...) asparagine glycan. The interval 121 to 153 (LPSAEDDDEDDDNSSSEEKAAENSKPNRPLWSH) is disordered. Over residues 124–135 (AEDDDEDDDNSS) the composition is skewed to acidic residues. 2 consecutive Ig-like C2-type domains span residues 154 to 242 (PEKM…YQLD) and 251 to 353 (PILQ…AWLT). Cysteines 174 and 226 form a disulfide. A disulfide bridge links C273 with C337. A helical transmembrane segment spans residues 372 to 393 (EIIIYCTGAAFVSAMVVTIIIF). Topologically, residues 394 to 812 (KMKHPSKKSD…KYSNGGLKKR (419 aa)) are cytoplasmic. Y457 is modified (phosphotyrosine; by autocatalysis). Residues 472–761 (LILGKPLGEG…LALSSNQEYL (290 aa)) form the Protein kinase domain. Residues 478–484 (LGEGCFG), K508, 556–558 (EYT), and N562 each bind ATP. Phosphotyrosine; by autocatalysis occurs at positions 577 and 579. D617 acts as the Proton acceptor in catalysis. ATP-binding residues include R621 and D635. Residues Y647, Y648, Y724, and Y760 each carry the phosphotyrosine; by autocatalysis modification. Residues 784–812 (SGEDSMFSHDPLPDEPCLPKYSNGGLKKR) form a disordered region.

Belongs to the protein kinase superfamily. Tyr protein kinase family. Fibroblast growth factor receptor subfamily. Monomer. Homodimer after ligand binding. Interacts with il17rd. In terms of processing, autophosphorylated. Binding of FGF family members together with heparan sulfate proteoglycan or heparin promotes receptor dimerization and autophosphorylation on tyrosine residues. Autophosphorylation occurs in trans between the two FGFR molecules present in the dimer and proceeds in a highly ordered manner. Phosphotyrosine residues provide docking sites for interacting proteins and so are crucial for FGFR1 function and its regulation. Post-translationally, ubiquitinated. FGFR1 is rapidly ubiquitinated after autophosphorylation, leading to internalization and degradation. N-glycosylated in the endoplasmic reticulum. The N-glycan chains undergo further maturation to an Endo H-resistant form in the Golgi apparatus.

It localises to the cell membrane. The protein resides in the nucleus. The protein localises to the cytoplasm. Its subcellular location is the cytosol. It is found in the cytoplasmic vesicle. It catalyses the reaction L-tyrosyl-[protein] + ATP = O-phospho-L-tyrosyl-[protein] + ADP + H(+). Present in an inactive conformation in the absence of bound ligand. Ligand binding leads to dimerization and activation by sequential autophosphorylation on tyrosine residues. Its function is as follows. Tyrosine-protein kinase that acts as a cell-surface receptor for fibroblast growth factors and plays an essential role in the regulation of embryonic development, cell proliferation, differentiation and migration. Required for normal mesoderm patterning and normal skeletogenesis. Phosphorylates PLCG1, FRS2, GAB1 and SHB. Ligand binding leads to the activation of several signaling cascades. Activation of PLCG1 leads to the production of the cellular signaling molecules diacylglycerol and inositol-1,4,5-trisphosphate. Phosphorylation of FRS2 triggers recruitment of GRB2, GAB1, PIK3R1 and SOS1, and mediates activation of RAS, MAPK1/ERK2, MAPK3/ERK1 and the MAP kinase signaling pathway, as well as of the AKT1 signaling pathway. Promotes phosphorylation of SHC1, STAT1 and PTPN11/SHP2. In the nucleus, enhances RPS6KA1 and CREB1 activity and contributes to the regulation of transcription. FGFR1 signaling is down-regulated by ubiquitination, internalization and degradation. This is Fibroblast growth factor receptor 1 (fgfr1) from Xenopus laevis (African clawed frog).